We begin with the raw amino-acid sequence, 423 residues long: T-box protein 2 (423 aa).

A DNA-binding region (T-box) is located at residues 70-243 (LWQQFSQCGT…NNPFAKGFRD (174 aa)). 2 disordered regions span residues 238–324 (AKGF…PLRS) and 384–423 (VEAT…LSKP). The span at 261-283 (DATQSPPGKTASLPTHSPHPSES) shows a compositional bias: polar residues. The span at 302–317 (TPTTSSLSTSTTPTLS) shows a compositional bias: low complexity. Positions 394 to 404 (AEKPEVKKEQK) are enriched in basic and acidic residues.

Sumoylated. As to expression, expressed in body wall muscles and a subset of pharyngeal neurons. Expressed in head neurons and occassionally tail neurons. Not expressed in the pharynx.

It localises to the nucleus. Functionally, involved in the transcriptional regulation of genes required for the development of pharyngeal muscles derived from the ABa lineage. Acts as a transcriptional repressor and binds to T-box binding sites in its own promoter to negatively autoregulate its own expression in neurons, seam cells and the gut in order to restrict its expression to certain tissues. May function together with the nfya-1-NF-Y complex to repress its own expression. Plays a role in neural fate specification in the hermaphrodite-specific neuron (HSN)/PHB neuron lineage, acting in concert with homeobox protein egl-5 and the asymmetric cell division protein ham-1. The sequence is that of T-box protein 2 from Caenorhabditis elegans.